We begin with the raw amino-acid sequence, 281 residues long: Streptomycin biosynthesis protein StrF (281 aa).

The protein operates within antibiotic biosynthesis; streptomycin biosynthesis. In terms of biological role, may be involved in the formation of N-methyl-L-glucosamine. This is Streptomycin biosynthesis protein StrF (strF) from Streptomyces griseus.